Reading from the N-terminus, the 433-residue chain is MQSMNVQPRVLAVGGEQFFSQRQASEQHQQQNMGPQVYSPKVNRARMFPQGMPVNTINGSVNQEMNNAYLLKQKNEPLLTQQQQQQQQQQQPFNIGTPVSVASLPPGLNVLQQQQQQQQQQQQQQQGVGLNRPLASQLPKHLTNQSMPPIFLPPPNYLFVRDVWKSNLYSEFAVIRQLVSQYNHVSISTEFVGTLARPIGTFRSKVDYHYQTMRANVDFLNPIQLGLSLSDANGNKPDNGPSTWQFNFEFDPKKEIMSTESLELLRKSGINFEKHENLGIDVFEFSQLLMDSGLMMDDSVTWITYHAAYDLGFLINILMNDSMPNNKEDFEWWVHQYMPNFYDLNLVYKIIQEFKNPQLQQSSQQQQQQQYSLTTLADELGLPRFSIFTTTGGQSLLMLLSFCQLSKLSMHKFPNGTDFAKYQGVIYGIDGDQ.

Residue Met-1 is modified to N-acetylmethionine. The disordered stretch occupies residues 78–98; it reads LLTQQQQQQQQQQQPFNIGTP. Residues 81–91 are compositionally biased toward low complexity; that stretch reads QQQQQQQQQQQ. Position 97 is a phosphothreonine; by YAK1 (Thr-97). Residues Ser-188, Glu-190, Asp-310, and Gln-394 each contribute to the a divalent metal cation site.

Belongs to the CAF1 family. In terms of assembly, subunit of the 1.0 MDa CCR4-NOT core complex that contains CCR4, CAF1, NOT1, NOT2, NOT3, NOT4, NOT5, CAF40 and CAF130. In the complex interacts with NOT1. The core complex probably is part of a less characterized 1.9 MDa CCR4-NOT complex. Mg(2+) serves as cofactor.

The protein resides in the cytoplasm. Its subcellular location is the nucleus. It carries out the reaction Exonucleolytic cleavage of poly(A) to 5'-AMP.. In terms of biological role, acts as a probably catalytic component of the CCR4-NOT core complex, which in the nucleus seems to be a general transcription factor, and in the cytoplasm the major mRNA deadenylase involved in mRNA turnover. In vitro, POP2 has 3'-exoribonuclease activity with a preference for poly(A) RNAs, but also degrades poly(U) and poly(C) RNAs. Is part of a glucose-sensing system involved in growth control in response to glucose availability. This is Poly(A) ribonuclease POP2 (POP2) from Saccharomyces cerevisiae (strain ATCC 204508 / S288c) (Baker's yeast).